The chain runs to 507 residues: ATP synthase subunit alpha, chloroplastic (507 aa).

An ATP-binding site is contributed by 170 to 177 (GDRQTGKT).

Belongs to the ATPase alpha/beta chains family. In terms of assembly, F-type ATPases have 2 components, CF(1) - the catalytic core - and CF(0) - the membrane proton channel. CF(1) has five subunits: alpha(3), beta(3), gamma(1), delta(1), epsilon(1). CF(0) has four main subunits: a, b, b' and c.

The protein resides in the plastid. Its subcellular location is the chloroplast thylakoid membrane. The enzyme catalyses ATP + H2O + 4 H(+)(in) = ADP + phosphate + 5 H(+)(out). Functionally, produces ATP from ADP in the presence of a proton gradient across the membrane. The alpha chain is a regulatory subunit. The polypeptide is ATP synthase subunit alpha, chloroplastic (Nicotiana tabacum (Common tobacco)).